A 272-amino-acid chain; its full sequence is Indole-3-glycerol phosphate synthase (272 aa).

This sequence belongs to the TrpC family.

The catalysed reaction is 1-(2-carboxyphenylamino)-1-deoxy-D-ribulose 5-phosphate + H(+) = (1S,2R)-1-C-(indol-3-yl)glycerol 3-phosphate + CO2 + H2O. It functions in the pathway amino-acid biosynthesis; L-tryptophan biosynthesis; L-tryptophan from chorismate: step 4/5. The protein is Indole-3-glycerol phosphate synthase of Mycobacterium tuberculosis (strain ATCC 25177 / H37Ra).